A 414-amino-acid chain; its full sequence is Esterase FrsA (414 aa).

It belongs to the FrsA family.

It catalyses the reaction a carboxylic ester + H2O = an alcohol + a carboxylate + H(+). In terms of biological role, catalyzes the hydrolysis of esters. The sequence is that of Esterase FrsA from Shigella boydii serotype 18 (strain CDC 3083-94 / BS512).